Reading from the N-terminus, the 338-residue chain is MLNERAKILLKTLVERYIHEGQPVGSRSLAKFSGLDLSPATIRNVMTDLEEMGFVSSPHTSAGRMPTTLGYRFFVDTLLVVQSLDNEQITLLENRMHPNNPSHLINVTSRLLSDLTQFVGVVVTPKRMGGAVFRHIEFVPLSEKRILLILVTPEGDVQNRIIFTETVYNQSDLIEAGNFLNQHYAGCALEEIRSGLQHELTQLRRNMTDLMNAAIEIGNAALQESSEAVVIAGEHKLFDVRDLSENLSSLKQLFELFERKSKLLQLMELSRQACGVKIFIGGESDETMLEEISVVTAPYEMEGKIVGTVGVIGPRRMAYERIIPIVDITARLLSNNLS.

This sequence belongs to the HrcA family.

Its function is as follows. Negative regulator of class I heat shock genes (grpE-dnaK-dnaJ and groELS operons). Prevents heat-shock induction of these operons. This chain is Heat-inducible transcription repressor HrcA, found in Nitrosomonas eutropha (strain DSM 101675 / C91 / Nm57).